Reading from the N-terminus, the 461-residue chain is Carboxypeptidase Rv3627c (461 aa).

Residues methionine 1 to alanine 28 form the signal peptide. Serine 114 functions as the Acyl-ester intermediate in the catalytic mechanism. The active-site Proton acceptor is the lysine 117. Residue serine 295 is part of the active site.

It belongs to the peptidase S13 family.

In terms of biological role, carboxypeptidase that cleaves terminal D-alanine from peptidoglycan in the mycobacterial cell wall. May cleave L-Lys-D-Ala and/or D-Ala-D-Ala peptide bonds. Exerts important effects on mycobacterial cell morphology and cell division. The protein is Carboxypeptidase Rv3627c of Mycobacterium tuberculosis (strain ATCC 25618 / H37Rv).